Consider the following 517-residue polypeptide: Ubiquitin carboxyl-terminal hydrolase 30 (517 aa).

The Mitochondrial intermembrane segment spans residues 1 to 35 (MLSSRAEAAMTAADRAIQRFLRTGAAVRYKVMKNW). A helical transmembrane segment spans residues 36 to 56 (GVIGGIAAALAAGIYVIWGPI). The Cytoplasmic segment spans residues 57–517 (TERKKRRKGL…HQSQECKSEE (461 aa)). The region spanning 68 to 502 (PGLVNLGNTC…SAYLLFYERV (435 aa)) is the USP domain. Cysteine 77 functions as the Nucleophile in the catalytic mechanism. Glycyl lysine isopeptide (Lys-Gly) (interchain with G-Cter in ubiquitin) cross-links involve residues lysine 235 and lysine 289. The tract at residues 364–395 (SQHNPKLNKNPGPTLELQDGPGAPTPVLNQPG) is disordered. Catalysis depends on histidine 452, which acts as the Proton acceptor.

Belongs to the peptidase C19 family. Post-translationally, ubiquitinated by parkin (PRKN) at Lys-235 and Lys-289, leading to its degradation. As to expression, expressed in skeletal muscle, pancreas, liver and kidney.

The protein localises to the mitochondrion outer membrane. It catalyses the reaction Thiol-dependent hydrolysis of ester, thioester, amide, peptide and isopeptide bonds formed by the C-terminal Gly of ubiquitin (a 76-residue protein attached to proteins as an intracellular targeting signal).. With respect to regulation, inhibited by the diterpenoid derivative 15-oxospiramilactone (S3). Functionally, deubiquitinating enzyme tethered to the mitochondrial outer membrane that acts as a key inhibitor of mitophagy by counteracting the action of parkin (PRKN): hydrolyzes ubiquitin attached by parkin on target proteins, such as RHOT1/MIRO1 and TOMM20, thereby blocking parkin's ability to drive mitophagy. Preferentially cleaves 'Lys-6'- and 'Lys-11'-linked polyubiquitin chains, 2 types of linkage that participate in mitophagic signaling. Does not cleave efficiently polyubiquitin phosphorylated at 'Ser-65'. Acts as a negative regulator of mitochondrial fusion by mediating deubiquitination of MFN1 and MFN2. The sequence is that of Ubiquitin carboxyl-terminal hydrolase 30 from Homo sapiens (Human).